The primary structure comprises 231 residues: Ribonuclease HII (231 aa).

The 192-residue stretch at 32–223 (WPVAGMDEAG…FRLGGTEVVE (192 aa)) folds into the RNase H type-2 domain. A divalent metal cation-binding residues include Asp38, Glu39, and Asp130.

It belongs to the RNase HII family. The cofactor is Mn(2+). It depends on Mg(2+) as a cofactor.

Its subcellular location is the cytoplasm. The catalysed reaction is Endonucleolytic cleavage to 5'-phosphomonoester.. In terms of biological role, endonuclease that specifically degrades the RNA of RNA-DNA hybrids. The polypeptide is Ribonuclease HII (Mesorhizobium japonicum (strain LMG 29417 / CECT 9101 / MAFF 303099) (Mesorhizobium loti (strain MAFF 303099))).